The sequence spans 414 residues: MKIYLVGGAVRDSLLNLPVKDKDWVVVGGTEKILLERNFQQVGKDFPVFLHPETHEEYALARKERKSGKGYTGFDTDCNSDVTLEEDLIRRDLTINAIAQDEYGNYIDPFQGKKDIECGLIRHVSESFIEDPLRVLRVARFAATLVHLGFKIAEETMLLMCIIVKKQELSYLTSNRIWNETEKALKTLNPHVYFQVLYECNALHFFFPEMYFLYEKKNFLNRSFFKKFCNKNIILMGLAEISLLNKDIDVRFSYLCQFLSVNQIDRNYSKIFFDSYAASIIHSVCKRFKIPSYIRDIAVLNTGFYFFLNTIHYQSSKNIINLFSKVDAWRKPDRVKKLAFLSNFNFLRNFKSEFFCIKSGCFLEKCFSVVKNVSIKLILKKGFKGYEIKQEITRLRIKKLEFWRIKNIKHRFYL.

ATP-binding residues include Gly-8 and Arg-11. CTP-binding residues include Gly-8 and Arg-11. 2 residues coordinate Mg(2+): Asp-21 and Asp-23. 3 residues coordinate ATP: Arg-91, Arg-137, and Arg-140. CTP is bound by residues Arg-91, Arg-137, and Arg-140.

It belongs to the tRNA nucleotidyltransferase/poly(A) polymerase family. Bacterial CCA-adding enzyme type 2 subfamily. Mg(2+) is required as a cofactor.

The catalysed reaction is a tRNA precursor + 2 CTP + ATP = a tRNA with a 3' CCA end + 3 diphosphate. The enzyme catalyses a tRNA with a 3' CCA end + 2 CTP + ATP = a tRNA with a 3' CCACCA end + 3 diphosphate. In terms of biological role, catalyzes the addition and repair of the essential 3'-terminal CCA sequence in tRNAs without using a nucleic acid template. Adds these three nucleotides in the order of C, C, and A to the tRNA nucleotide-73, using CTP and ATP as substrates and producing inorganic pyrophosphate. tRNA 3'-terminal CCA addition is required both for tRNA processing and repair. Also involved in tRNA surveillance by mediating tandem CCA addition to generate a CCACCA at the 3' terminus of unstable tRNAs. While stable tRNAs receive only 3'-terminal CCA, unstable tRNAs are marked with CCACCA and rapidly degraded. In Buchnera aphidicola subsp. Acyrthosiphon pisum (strain 5A), this protein is CCA-adding enzyme.